The chain runs to 355 residues: Erythronate-4-phosphate dehydrogenase (355 aa).

Substrate is bound by residues Ser-45 and Thr-66. Asp-146 provides a ligand contact to NAD(+). Residue Arg-206 is part of the active site. Asp-229 is a binding site for NAD(+). Glu-234 is an active-site residue. The active-site Proton donor is the His-251. An NAD(+)-binding site is contributed by Gly-254. Residue Tyr-255 participates in substrate binding.

The protein belongs to the D-isomer specific 2-hydroxyacid dehydrogenase family. PdxB subfamily. In terms of assembly, homodimer.

It localises to the cytoplasm. It carries out the reaction 4-phospho-D-erythronate + NAD(+) = (R)-3-hydroxy-2-oxo-4-phosphooxybutanoate + NADH + H(+). Its pathway is cofactor biosynthesis; pyridoxine 5'-phosphate biosynthesis; pyridoxine 5'-phosphate from D-erythrose 4-phosphate: step 2/5. Functionally, catalyzes the oxidation of erythronate-4-phosphate to 3-hydroxy-2-oxo-4-phosphonooxybutanoate. The sequence is that of Erythronate-4-phosphate dehydrogenase from Acinetobacter baumannii (strain ACICU).